Reading from the N-terminus, the 394-residue chain is Elongation factor Tu 2 (394 aa).

The tr-type G domain maps to 9 to 204 (KPHCNIGTIG…SIDDYIPQPT (196 aa)). A G1 region spans residues 18–25 (GHVDHGKT). Residue 18–25 (GHVDHGKT) coordinates GTP. Mg(2+) is bound at residue T25. The tract at residues 61–65 (GITIQ) is G2. Residues 82–85 (DCPG) are G3. GTP-binding positions include 82-86 (DCPGH) and 137-140 (NKID). A G4 region spans residues 137-140 (NKID). Residues 174-176 (SAL) form a G5 region.

Belongs to the TRAFAC class translation factor GTPase superfamily. Classic translation factor GTPase family. EF-Tu/EF-1A subfamily. As to quaternary structure, monomer.

The protein localises to the cytoplasm. It catalyses the reaction GTP + H2O = GDP + phosphate + H(+). In terms of biological role, GTP hydrolase that promotes the GTP-dependent binding of aminoacyl-tRNA to the A-site of ribosomes during protein biosynthesis. This is Elongation factor Tu 2 from Orientia tsutsugamushi (strain Boryong) (Rickettsia tsutsugamushi).